The following is an 806-amino-acid chain: WEB family protein At3g02930, chloroplastic (806 aa).

The transit peptide at 1–78 (MASKIKNGLS…PTPPEKTQIR (78 aa)) directs the protein to the chloroplast. 2 disordered regions span residues 1–94 (MASK…QIKE) and 380–403 (KSEQKLGIAEEESSKSEKEAEKLK). Residues 9–22 (LSDTTLRKSSSTSL) are compositionally biased toward low complexity. Residues 34-59 (PDSNSPSPTQQQSRLSFERPSSNSKP) are compositionally biased toward polar residues. Coiled-coil stretches lie at residues 88–530 (QSVQ…FESA), 585–662 (DCLK…IEEN), and 698–757 (ETLD…EDLN). Positions 391 to 403 (ESSKSEKEAEKLK) are enriched in basic and acidic residues. 2 disordered regions span residues 684–725 (ENGY…EDET) and 746–777 (KESAKEEEEDLNVVDQSQKTSPVNGLTGEDEL). 2 stretches are compositionally biased toward basic and acidic residues: residues 685–699 (NGYRSAEEKSSKVET) and 706–725 (KLEEDTEKKEKKERSPEDET). A compositionally biased stretch (polar residues) spans 759 to 769 (VDQSQKTSPVN).

It belongs to the WEB family.

It is found in the plastid. The protein resides in the chloroplast. The sequence is that of WEB family protein At3g02930, chloroplastic from Arabidopsis thaliana (Mouse-ear cress).